Here is a 339-residue protein sequence, read N- to C-terminus: DNA-directed RNA polymerase subunit alpha (339 aa).

Positions 1–233 (MVREEVAGST…DLFLPFLHAE (233 aa)) are alpha N-terminal domain (alpha-NTD). The segment at 266 to 339 (GIPLNCIFID…IDLLKNKLSF (74 aa)) is alpha C-terminal domain (alpha-CTD).

It belongs to the RNA polymerase alpha chain family. In terms of assembly, in plastids the minimal PEP RNA polymerase catalytic core is composed of four subunits: alpha, beta, beta', and beta''. When a (nuclear-encoded) sigma factor is associated with the core the holoenzyme is formed, which can initiate transcription.

Its subcellular location is the plastid. It localises to the chloroplast. The enzyme catalyses RNA(n) + a ribonucleoside 5'-triphosphate = RNA(n+1) + diphosphate. Its function is as follows. DNA-dependent RNA polymerase catalyzes the transcription of DNA into RNA using the four ribonucleoside triphosphates as substrates. This Psathyrostachys juncea (Russian wildrye) protein is DNA-directed RNA polymerase subunit alpha.